The primary structure comprises 593 residues: Solute carrier family 13 member 2 (593 aa).

A run of 4 helical transmembrane segments spans residues 11–31 (YRMY…PILV), 53–73 (ALPL…MGIM), 86–106 (TNVL…WNLH), and 121–141 (PALL…WISN). The segment covering 164 to 184 (SNVEEGSDNPTFELQEPSPQK) has biased composition (polar residues). The segment at 164-204 (SNVEEGSDNPTFELQEPSPQKETSKVDEKDNGQAQPLPAVP) is disordered. A compositionally biased stretch (basic and acidic residues) spans 185-194 (ETSKVDEKDN). Transmembrane regions (helical) follow at residues 221–241 (GMSL…LTGT), 270–290 (FAFP…QILF), 327–347 (PMSF…LLWF), 369–389 (VMVS…MVPS), 451–471 (LMPL…LLVA), 485–505 (LLLP…LYVM), 514–534 (LAFM…FGGL), and 543–563 (GIML…SWGV).

The protein belongs to the SLC13A/DASS transporter (TC 2.A.47) family. NADC subfamily. Abundant in kidney and small intestine.

The protein resides in the apical cell membrane. It catalyses the reaction succinate(out) + 3 Na(+)(out) = succinate(in) + 3 Na(+)(in). It carries out the reaction fumarate(out) + 3 Na(+)(out) = fumarate(in) + 3 Na(+)(in). The catalysed reaction is 2-oxoglutarate(out) + 3 Na(+)(out) = 2-oxoglutarate(in) + 3 Na(+)(in). Li(+) decreases succinate transport in the presence of Na(+), by competing at one of the three cation binding sites. Low-affinity sodium-dicarboxylate cotransporter, that mediates the entry of citric acid cycle intermediates, such as succinate, citrate, fumarate and alpha-ketoglutarate (2-oxoglutarate) into the small intestine and renal proximal tubule. Transports the dicarboxylate into the cell with a probable stoichiometry of 3 Na(+) for 1 divalent dicarboxylate, rendering the process electrogenic. Citrate is transported in protonated form as a divalent anion, rather than the trivalent form which is normally found in blood. Has a critical role in renal dicarboxylate transport. The protein is Solute carrier family 13 member 2 (SLC13A2) of Oryctolagus cuniculus (Rabbit).